The chain runs to 156 residues: Ribosomal RNA large subunit methyltransferase H (156 aa).

S-adenosyl-L-methionine is bound by residues Leu-73, Gly-104, and 123–128 (LSALTL).

It belongs to the RNA methyltransferase RlmH family. Homodimer.

It is found in the cytoplasm. The enzyme catalyses pseudouridine(1915) in 23S rRNA + S-adenosyl-L-methionine = N(3)-methylpseudouridine(1915) in 23S rRNA + S-adenosyl-L-homocysteine + H(+). Its function is as follows. Specifically methylates the pseudouridine at position 1915 (m3Psi1915) in 23S rRNA. The polypeptide is Ribosomal RNA large subunit methyltransferase H (Shewanella pealeana (strain ATCC 700345 / ANG-SQ1)).